Reading from the N-terminus, the 204-residue chain is Holliday junction branch migration complex subunit RuvA (204 aa).

Positions 1–64 are domain I; sequence MIGRLQGILL…EDAHLLFGFA (64 aa). Residues 65 to 143 are domain II; the sequence is QKTDRTLFRE…GVKQSDFFVE (79 aa). The interval 144–155 is flexible linker; the sequence is STHIPLSPSIES. The interval 156 to 204 is domain III; that stretch reads HSESSSDEAISALIALGYKPAEAEKMVKRVAKPELTSEQVIREALKAAL.

Belongs to the RuvA family. As to quaternary structure, homotetramer. Forms an RuvA(8)-RuvB(12)-Holliday junction (HJ) complex. HJ DNA is sandwiched between 2 RuvA tetramers; dsDNA enters through RuvA and exits via RuvB. An RuvB hexamer assembles on each DNA strand where it exits the tetramer. Each RuvB hexamer is contacted by two RuvA subunits (via domain III) on 2 adjacent RuvB subunits; this complex drives branch migration. In the full resolvosome a probable DNA-RuvA(4)-RuvB(12)-RuvC(2) complex forms which resolves the HJ.

Its subcellular location is the cytoplasm. The RuvA-RuvB-RuvC complex processes Holliday junction (HJ) DNA during genetic recombination and DNA repair, while the RuvA-RuvB complex plays an important role in the rescue of blocked DNA replication forks via replication fork reversal (RFR). RuvA specifically binds to HJ cruciform DNA, conferring on it an open structure. The RuvB hexamer acts as an ATP-dependent pump, pulling dsDNA into and through the RuvAB complex. HJ branch migration allows RuvC to scan DNA until it finds its consensus sequence, where it cleaves and resolves the cruciform DNA. The chain is Holliday junction branch migration complex subunit RuvA from Haemophilus influenzae (strain PittGG).